Here is a 524-residue protein sequence, read N- to C-terminus: Histidine ammonia-lyase (524 aa).

Positions alanine 139–glycine 141 form a cross-link, 5-imidazolinone (Ala-Gly). 2,3-didehydroalanine (Ser) is present on serine 140. The interval alanine 500–histidine 524 is disordered.

This sequence belongs to the PAL/histidase family. Post-translationally, contains an active site 4-methylidene-imidazol-5-one (MIO), which is formed autocatalytically by cyclization and dehydration of residues Ala-Ser-Gly.

Its subcellular location is the cytoplasm. It catalyses the reaction L-histidine = trans-urocanate + NH4(+). The protein operates within amino-acid degradation; L-histidine degradation into L-glutamate; N-formimidoyl-L-glutamate from L-histidine: step 1/3. The protein is Histidine ammonia-lyase (hutH) of Deinococcus radiodurans (strain ATCC 13939 / DSM 20539 / JCM 16871 / CCUG 27074 / LMG 4051 / NBRC 15346 / NCIMB 9279 / VKM B-1422 / R1).